Reading from the N-terminus, the 187-residue chain is Large ribosomal subunit protein uL6 (187 aa).

The disordered stretch occupies residues 159-187 (PYKGKGIRYKGEQLSSNPERLQVRSKEVR).

This sequence belongs to the universal ribosomal protein uL6 family. As to quaternary structure, part of the 50S ribosomal subunit.

Functionally, this protein binds to the 23S rRNA, and is important in its secondary structure. It is located near the subunit interface in the base of the L7/L12 stalk, and near the tRNA binding site of the peptidyltransferase center. The chain is Large ribosomal subunit protein uL6 from Aquifex pyrophilus.